Reading from the N-terminus, the 764-residue chain is Molybdenum cofactor sulfurase 1 (764 aa).

The residue at position 228 (K228) is an N6-(pyridoxal phosphate)lysine. C394 is an active-site residue. The 156-residue stretch at 607 to 762 (LRLLKQSDEE…LYCNSVVEGL (156 aa)) folds into the MOSC domain.

It belongs to the class-V pyridoxal-phosphate-dependent aminotransferase family. MOCOS subfamily. Pyridoxal 5'-phosphate serves as cofactor.

It catalyses the reaction Mo-molybdopterin + L-cysteine + AH2 = thio-Mo-molybdopterin + L-alanine + A + H2O. Its function is as follows. Sulfurates the molybdenum cofactor. Sulfation of molybdenum is essential for xanthine dehydrogenase (XDH) and aldehyde oxidase (ADO) enzymes in which molybdenum cofactor is liganded by 1 oxygen and 1 sulfur atom in active form. The polypeptide is Molybdenum cofactor sulfurase 1 (Aedes aegypti (Yellowfever mosquito)).